The following is a 456-amino-acid chain: Putative E3 ubiquitin-protein ligase XBAT31 (456 aa).

5 ANK repeats span residues 45–74, 78–107, 112–141, 157–186, and 194–224; these read DRHS…NPDL, HKQT…NILM, NRRT…SSPV, KGAT…LVCA, and PGST…RLQR. An RING-type zinc finger spans residues 319–368; that stretch reads CCICFEQVCTIEVKDCGHQMCAQCTLALCCHNKPNPTTSTVTPPVCPFCR.

It carries out the reaction S-ubiquitinyl-[E2 ubiquitin-conjugating enzyme]-L-cysteine + [acceptor protein]-L-lysine = [E2 ubiquitin-conjugating enzyme]-L-cysteine + N(6)-ubiquitinyl-[acceptor protein]-L-lysine.. It functions in the pathway protein modification; protein ubiquitination. No E3 ubiquitin-protein ligase activity observed when associated with the E2 enzyme UBC8 in vitro. The protein is Putative E3 ubiquitin-protein ligase XBAT31 (XBAT31) of Arabidopsis thaliana (Mouse-ear cress).